Reading from the N-terminus, the 290-residue chain is ATP synthase gamma chain (290 aa).

This sequence belongs to the ATPase gamma chain family. As to quaternary structure, F-type ATPases have 2 components, CF(1) - the catalytic core - and CF(0) - the membrane proton channel. CF(1) has five subunits: alpha(3), beta(3), gamma(1), delta(1), epsilon(1). CF(0) has three main subunits: a, b and c.

It is found in the cell membrane. Produces ATP from ADP in the presence of a proton gradient across the membrane. The gamma chain is believed to be important in regulating ATPase activity and the flow of protons through the CF(0) complex. This chain is ATP synthase gamma chain, found in Rubrobacter xylanophilus (strain DSM 9941 / JCM 11954 / NBRC 16129 / PRD-1).